A 360-amino-acid polypeptide reads, in one-letter code: NADP-dependent alcohol dehydrogenase 6 (360 aa).

Cysteine 46 serves as a coordination point for Zn(2+). 2 residues coordinate NADP(+): glycine 47 and histidine 51. Residues histidine 68, cysteine 100, cysteine 103, cysteine 106, and cysteine 114 each contribute to the Zn(2+) site. Residue serine 131 is modified to Phosphoserine. Residue cysteine 163 coordinates Zn(2+). 16 residues coordinate NADP(+): leucine 188, glycine 190, isoleucine 191, serine 210, arginine 211, lysine 215, cysteine 250, serine 252, threonine 255, aspartate 256, isoleucine 275, isoleucine 277, tyrosine 298, serine 299, leucine 301, and arginine 348. Position 359 is a phosphoserine (serine 359).

The protein belongs to the zinc-containing alcohol dehydrogenase family. As to quaternary structure, homodimer. The cofactor is Zn(2+).

It localises to the cytoplasm. It is found in the nucleus. The catalysed reaction is a primary alcohol + NADP(+) = an aldehyde + NADPH + H(+). It carries out the reaction (E)-cinnamyl alcohol + NADP(+) = (E)-cinnamaldehyde + NADPH + H(+). The enzyme catalyses hexan-1-ol + NADP(+) = hexanal + NADPH + H(+). It catalyses the reaction 3-methylbutanol + NADP(+) = 3-methylbutanal + NADPH + H(+). The catalysed reaction is S-nitroso-CoA + NADPH + H(+) = sulfinamide-CoA + NADP(+). Its function is as follows. NADP-dependent, medium-chain alcohol dehydrogenase with a broad substrate specificity. Aldehydes exhibited 50-12000 times higher catalytic efficiency than the corresponding alcohols, therefore the major function of the enzyme is as an aldehyde reductase. The enzyme is active towards aromatic and aliphatic (linear and branched-chain) aldehydes. The enzyme is very active towards aromatic aldehydes, such as cinnamaldehyde, benzaldehyde and substituted benzaldehydes, such as veratraldehyde and panisaldehyde. It exhibits low activity towards substituted cinnamaldehydes, such as coniferaldehyde and sinapaldehyde. The enzyme has no activity with ketones, such as acetone or cyclohexanone. For the reverse reaction, linear and branched-chain primary alcohols are substrates, whereas very low activity is found with secondary alcohols, such as butan-2-ol. The enzyme may be physiologically involved in several steps of the lignin degradation pathway, initiated by other microorganisms, in the synthesis of fusel alcohols, products derived from the aminoacidic metabolism, and in the homeostasis of NADP(H). Has the ability to reduce 5-hydroxymethyl furfural (HMF), a furan derivative which is formed during the hydrolysis of lignocellulosic materials, to 5-hydroxymethylfurfuryl alcohol, thereby alleviating the inhibition of the fermentation of lignocellulose hydrolysates by HMF during fuel ethanol production. Also acts as an inhibitor of protein S-nitrosylation by mediating degradation of S-nitroso-coenzyme A (S-nitroso-CoA), a cofactor required to S-nitrosylate proteins. This is NADP-dependent alcohol dehydrogenase 6 from Saccharomyces cerevisiae (strain ATCC 204508 / S288c) (Baker's yeast).